The sequence spans 326 residues: MYGIEYTTVLTFLISVILLNYILKSLTRIMDFIIYRFLFVIVILLPLLSAQNYGINLPITGSMDTPYINSTQGEVFLTSTLCLYYPTEAATEINDNSWKDTLSQLFLTKGWPTGSVYFKDYTDIASFSVDPQLYCDYNLVMMKYDATLQLDMSELADLILNEWLCNPMDITLYYYQQTDEANKWISMGSSCTIKVCPLNTQTLGIGCLTTDTNTFEEVATAEKLAITDVVDGVNHKLSVTTNTCTIRNCKKLGPRENVAVIQVGGSDILDITADPTTAPQTERMMRVNWKKWWQVFYTIVDYVNQIVQAMSKRSRSLNSAAFYYRV.

The N-terminal stretch at 1-50 (MYGIEYTTVLTFLISVILLNYILKSLTRIMDFIIYRFLFVIVILLPLLSA) is a signal peptide. N-linked (GlcNAc...) asparagine; by host glycosylation is present at Asn-69. 4 cysteine pairs are disulfide-bonded: Cys-82/Cys-135, Cys-165/Cys-249, Cys-191/Cys-244, and Cys-196/Cys-207. Asp-95 provides a ligand contact to Ca(2+). The tract at residues 165 to 167 (CNP) is CNP motif; interaction with ITGAV/ITGB3. The Ca(2+) site is built by Gln-177, Gly-206, Thr-214, Glu-216, Asp-228, Val-229, and Asp-231. Positions 253 to 255 (GPR) are GPR motif; interaction with ITGAX/ITGB2. Residue Asp-301 participates in Ca(2+) binding.

Belongs to the rotavirus VP7 family. In terms of assembly, homotrimer; disulfide-linked. 2 Ca(2+) ions bound at each subunit interface in the trimer hold the trimer together. Interacts with the intermediate capsid protein VP6. Interacts with the outer capsid protein VP5*. Post-translationally, N-glycosylated. In terms of processing, the N-terminus is blocked possibly by pyroglutamic acid.

The protein localises to the virion. It is found in the host endoplasmic reticulum lumen. Its function is as follows. Calcium-binding protein that interacts with rotavirus cell receptors once the initial attachment by VP4 has been achieved. Rotavirus attachment and entry into the host cell probably involves multiple sequential contacts between the outer capsid proteins VP4 and VP7, and the cell receptors. Following entry into the host cell, low intracellular or intravesicular Ca(2+) concentration probably causes the calcium-stabilized VP7 trimers to dissociate from the virion. This step is probably necessary for the membrane-disrupting entry step and the release of VP4, which is locked onto the virion by VP7. This Sus scrofa (Pig) protein is Outer capsid glycoprotein VP7.